The following is a 717-amino-acid chain: Glutamine--fructose-6-phosphate aminotransferase [isomerizing] (717 aa).

The active-site For GATase activity is C2. A Glutamine amidotransferase type-2 domain is found at 2-318 (CGIFGYCNYL…DDDLAHIYDG (317 aa)). A Phosphoserine modification is found at S253. T334 is subject to Phosphothreonine. S336 carries the post-translational modification Phosphoserine. 2 SIS domains span residues 390-529 (WLPV…DRVS) and 562-707 (CATE…VDFP).

The catalysed reaction is D-fructose 6-phosphate + L-glutamine = D-glucosamine 6-phosphate + L-glutamate. The protein operates within nucleotide-sugar biosynthesis; UDP-N-acetyl-alpha-D-glucosamine biosynthesis; alpha-D-glucosamine 6-phosphate from D-fructose 6-phosphate: step 1/1. Its function is as follows. Involved in amino sugar synthesis (formation of chitin, supplies the amino sugars of asparagine-linked oligosaccharides of glycoproteins). This Saccharomyces cerevisiae (strain ATCC 204508 / S288c) (Baker's yeast) protein is Glutamine--fructose-6-phosphate aminotransferase [isomerizing] (GFA1).